Reading from the N-terminus, the 247-residue chain is Triosephosphate isomerase (247 aa).

Position 9–11 (asparagine 9–lysine 11) interacts with substrate. Catalysis depends on histidine 94, which acts as the Electrophile. Catalysis depends on glutamate 166, which acts as the Proton acceptor. Residues glycine 172, serine 211, and glycine 232–glycine 233 each bind substrate.

The protein belongs to the triosephosphate isomerase family. In terms of assembly, homodimer.

The protein resides in the cytoplasm. The enzyme catalyses D-glyceraldehyde 3-phosphate = dihydroxyacetone phosphate. It functions in the pathway carbohydrate biosynthesis; gluconeogenesis. The protein operates within carbohydrate degradation; glycolysis; D-glyceraldehyde 3-phosphate from glycerone phosphate: step 1/1. Involved in the gluconeogenesis. Catalyzes stereospecifically the conversion of dihydroxyacetone phosphate (DHAP) to D-glyceraldehyde-3-phosphate (G3P). This Cupriavidus taiwanensis (strain DSM 17343 / BCRC 17206 / CCUG 44338 / CIP 107171 / LMG 19424 / R1) (Ralstonia taiwanensis (strain LMG 19424)) protein is Triosephosphate isomerase.